Consider the following 124-residue polypeptide: Putative membrane protein insertion efficiency factor (124 aa).

Belongs to the UPF0161 family.

The protein resides in the cell inner membrane. Its function is as follows. Could be involved in insertion of integral membrane proteins into the membrane. The polypeptide is Putative membrane protein insertion efficiency factor (Psychrobacter arcticus (strain DSM 17307 / VKM B-2377 / 273-4)).